The chain runs to 431 residues: Glutamate--tRNA ligase 1 (431 aa).

A 'HIGH' region motif is present at residues 6–16 (PSPTGDMHIGN). The 'KMSKS' region signature appears at 235–239 (KMSKR). Lys-238 provides a ligand contact to ATP.

It belongs to the class-I aminoacyl-tRNA synthetase family. Glutamate--tRNA ligase type 1 subfamily. Monomer.

The protein localises to the cytoplasm. It carries out the reaction tRNA(Glu) + L-glutamate + ATP = L-glutamyl-tRNA(Glu) + AMP + diphosphate. In terms of biological role, catalyzes the attachment of glutamate to tRNA(Glu) in a two-step reaction: glutamate is first activated by ATP to form Glu-AMP and then transferred to the acceptor end of tRNA(Glu). The chain is Glutamate--tRNA ligase 1 from Campylobacter jejuni subsp. jejuni serotype O:2 (strain ATCC 700819 / NCTC 11168).